A 201-amino-acid chain; its full sequence is Holliday junction resolvase RecU (201 aa).

Residues threonine 87, aspartate 89, glutamate 102, and glutamine 121 each coordinate Mg(2+).

The protein belongs to the RecU family. Mg(2+) is required as a cofactor.

The protein resides in the cytoplasm. The enzyme catalyses Endonucleolytic cleavage at a junction such as a reciprocal single-stranded crossover between two homologous DNA duplexes (Holliday junction).. Endonuclease that resolves Holliday junction intermediates in genetic recombination. Cleaves mobile four-strand junctions by introducing symmetrical nicks in paired strands. Promotes annealing of linear ssDNA with homologous dsDNA. Required for DNA repair, homologous recombination and chromosome segregation. This chain is Holliday junction resolvase RecU, found in Listeria welshimeri serovar 6b (strain ATCC 35897 / DSM 20650 / CCUG 15529 / CIP 8149 / NCTC 11857 / SLCC 5334 / V8).